A 212-amino-acid polypeptide reads, in one-letter code: uncharacterized protein (212 aa).

Disordered stretches follow at residues 1 to 148 (MEKD…LNDL) and 168 to 190 (EVVTDAKKEEKPSQMDVEDLSED). Basic and acidic residues predominate over residues 61 to 70 (KELESEDQGK). Over residues 71-85 (DPSSNAEDASCQKNL) the composition is skewed to polar residues. 3 stretches are compositionally biased toward basic and acidic residues: residues 99–115 (LGHESGKQDPEREKSDL), 124–144 (EGEHADGGLQEAKEQEAESIK), and 168–180 (EVVTDAKKEEKPS).

This is an uncharacterized protein from Homo sapiens (Human).